A 270-amino-acid polypeptide reads, in one-letter code: Glutamate racemase (270 aa).

Substrate contacts are provided by residues Asp7–Ser8 and Tyr39–Gly40. Cys70 serves as the catalytic Proton donor/acceptor. Asn71–Thr72 provides a ligand contact to substrate. The active-site Proton donor/acceptor is Cys194. A substrate-binding site is contributed by Thr195 to His196.

The protein belongs to the aspartate/glutamate racemases family.

It carries out the reaction L-glutamate = D-glutamate. The protein operates within cell wall biogenesis; peptidoglycan biosynthesis. Provides the (R)-glutamate required for cell wall biosynthesis. This is Glutamate racemase from Jannaschia sp. (strain CCS1).